The chain runs to 456 residues: Putative F-box/FBD/LRR-repeat protein At1g66300 (456 aa).

Positions 1–23 (MDEDGEKRVRTKRLCSPESSDKK) are disordered. One can recognise an F-box domain in the interval 28–74 (VDWVRDLPESLICHVLLNLSTKDVIKNCVLSTKWRYLWRYVPGLDLD). LRR repeat units follow at residues 136-163 (HLDLEWGALEIPPIVYVCKSLVSLKLCG), 185-210 (VKFANDLALEMLISGCLVLKSLTLCR), 234-260 (PNTMGPEYEELIVEIDTPKLQDLTLSH), and 347-372 (FYEDRWEMLPFFLESCPNLKSLVVGS). Residues 377–429 (MERTSIISGHRCLLSSLEYVEIETPLTGEVFEMKLVSYLLENSPILKKLTIHL) form the FBD domain.

This Arabidopsis thaliana (Mouse-ear cress) protein is Putative F-box/FBD/LRR-repeat protein At1g66300.